The primary structure comprises 321 residues: Endochitinase 33 (321 aa).

The N-terminal stretch at 1–19 is a signal peptide; sequence MPSLTALASLLALVPSALA. The region spanning 27–321 is the GH18 domain; sequence QNIAVYWGQN…FETQVVNALR (295 aa). The active-site Proton donor is glutamate 167.

Belongs to the glycosyl hydrolase 18 family. Chitinase class III subfamily. In terms of assembly, monomer.

It is found in the secreted. The enzyme catalyses Random endo-hydrolysis of N-acetyl-beta-D-glucosaminide (1-&gt;4)-beta-linkages in chitin and chitodextrins.. Secreted chitinase involved in the degradation of chitin, a component of the cell walls of fungi and exoskeletal elements of some animals (including worms and arthropods). Plays a morphogenetic role during apical growth, cell division and differentiation (cell wall morphogenesis). May be involved in the degradation and further assimilation of phytopathogenic fungi, namely mycoparasitism, the major mechanism accounting for the antagonistic activity against phytopathogenic fungi displayed by Trichoderma. This chain is Endochitinase 33 (chit33), found in Trichoderma harzianum (Hypocrea lixii).